The following is a 111-amino-acid chain: Large ribosomal subunit protein uL22 (111 aa).

Belongs to the universal ribosomal protein uL22 family. Part of the 50S ribosomal subunit.

This protein binds specifically to 23S rRNA; its binding is stimulated by other ribosomal proteins, e.g. L4, L17, and L20. It is important during the early stages of 50S assembly. It makes multiple contacts with different domains of the 23S rRNA in the assembled 50S subunit and ribosome. In terms of biological role, the globular domain of the protein is located near the polypeptide exit tunnel on the outside of the subunit, while an extended beta-hairpin is found that lines the wall of the exit tunnel in the center of the 70S ribosome. This chain is Large ribosomal subunit protein uL22, found in Chlamydia pneumoniae (Chlamydophila pneumoniae).